The chain runs to 253 residues: 5'/3'-nucleotidase SurE (253 aa).

Positions 8, 9, 39, and 92 each coordinate a divalent metal cation.

Belongs to the SurE nucleotidase family. A divalent metal cation serves as cofactor.

It is found in the cytoplasm. The catalysed reaction is a ribonucleoside 5'-phosphate + H2O = a ribonucleoside + phosphate. It catalyses the reaction a ribonucleoside 3'-phosphate + H2O = a ribonucleoside + phosphate. It carries out the reaction [phosphate](n) + H2O = [phosphate](n-1) + phosphate + H(+). Its function is as follows. Nucleotidase with a broad substrate specificity as it can dephosphorylate various ribo- and deoxyribonucleoside 5'-monophosphates and ribonucleoside 3'-monophosphates with highest affinity to 3'-AMP. Also hydrolyzes polyphosphate (exopolyphosphatase activity) with the preference for short-chain-length substrates (P20-25). Might be involved in the regulation of dNTP and NTP pools, and in the turnover of 3'-mononucleotides produced by numerous intracellular RNases (T1, T2, and F) during the degradation of various RNAs. This Escherichia fergusonii (strain ATCC 35469 / DSM 13698 / CCUG 18766 / IAM 14443 / JCM 21226 / LMG 7866 / NBRC 102419 / NCTC 12128 / CDC 0568-73) protein is 5'/3'-nucleotidase SurE.